The primary structure comprises 123 residues: Large ribosomal subunit protein bL17 (123 aa).

It belongs to the bacterial ribosomal protein bL17 family. Part of the 50S ribosomal subunit. Contacts protein L32.

The protein is Large ribosomal subunit protein bL17 of Borreliella afzelii (strain PKo) (Borrelia afzelii).